The following is a 368-amino-acid chain: Ubiquitin domain-containing protein UBFD1 (368 aa).

The disordered stretch occupies residues 106 to 139; sequence SCDARGNLQPAPAQPPGDPAAQASVSNGEDAGGG. The region spanning 143–218 is the Ubiquitin-like domain; that stretch reads ELVDLKIIWN…IMVVGSTIND (76 aa). The interval 231 to 263 is disordered; that stretch reads QDAKAEENKKEPLCRQKQHRKVLDKGKPEDVMP. 2 stretches are compositionally biased toward basic and acidic residues: residues 233–244 and 251–260; these read AKAEENKKEPLC and KVLDKGKPED.

This chain is Ubiquitin domain-containing protein UBFD1 (Ubfd1), found in Mus musculus (Mouse).